The sequence spans 385 residues: Chorismate synthase (385 aa).

Residues 43–63 (PDLDRRRPGTSRHVTQRNEPD) form a disordered region. NADP(+) is bound by residues R48 and R54. Residues 125-127 (RSS), 238-239 (NA), G278, 293-297 (KPTSS), and R319 each bind FMN. A compositionally biased stretch (low complexity) spans 363–372 (AQAPRTETAP). Residues 363–385 (AQAPRTETAPATPPLDAGDDIEA) form a disordered region.

Belongs to the chorismate synthase family. Homotetramer. FMNH2 serves as cofactor.

It catalyses the reaction 5-O-(1-carboxyvinyl)-3-phosphoshikimate = chorismate + phosphate. It participates in metabolic intermediate biosynthesis; chorismate biosynthesis; chorismate from D-erythrose 4-phosphate and phosphoenolpyruvate: step 7/7. Functionally, catalyzes the anti-1,4-elimination of the C-3 phosphate and the C-6 proR hydrogen from 5-enolpyruvylshikimate-3-phosphate (EPSP) to yield chorismate, which is the branch point compound that serves as the starting substrate for the three terminal pathways of aromatic amino acid biosynthesis. This reaction introduces a second double bond into the aromatic ring system. The protein is Chorismate synthase of Leptothrix cholodnii (strain ATCC 51168 / LMG 8142 / SP-6) (Leptothrix discophora (strain SP-6)).